A 194-amino-acid chain; its full sequence is Adenylate kinase isoenzyme 1 (194 aa).

Methionine 1 carries the N-acetylmethionine modification. Residue 18-23 (GSGKGT) participates in ATP binding. Serine 38 carries the phosphoserine modification. Residues 38 to 67 (STGDLLRSEVSSGSARGKKLSEIMEKGQLV) form an NMP region. AMP is bound by residues threonine 39, arginine 44, 65-67 (QLV), 94-97 (GYPR), and glutamine 101. The interval 131 to 141 (KRGETSGRVDD) is LID. An ATP-binding site is contributed by arginine 132. Arginine 138 and arginine 149 together coordinate AMP. An ATP-binding site is contributed by glycine 177.

This sequence belongs to the adenylate kinase family. AK1 subfamily. Monomer. It depends on Mg(2+) as a cofactor.

Its subcellular location is the cytoplasm. The catalysed reaction is a ribonucleoside 5'-phosphate + ATP = a ribonucleoside 5'-diphosphate + ADP. It catalyses the reaction AMP + ATP = 2 ADP. The enzyme catalyses dAMP + ATP = dADP + ADP. It carries out the reaction dATP + AMP = dADP + ADP. The catalysed reaction is dAMP + dATP = 2 dADP. It catalyses the reaction a 2'-deoxyribonucleoside 5'-diphosphate + ATP = a 2'-deoxyribonucleoside 5'-triphosphate + ADP. The enzyme catalyses a ribonucleoside 5'-diphosphate + ATP = a ribonucleoside 5'-triphosphate + ADP. It carries out the reaction CDP + GTP = CTP + GDP. The catalysed reaction is GDP + ATP = GTP + ADP. It catalyses the reaction UDP + ATP = UTP + ADP. The enzyme catalyses GTP + UDP = UTP + GDP. It carries out the reaction dTDP + GTP = dTTP + GDP. The catalysed reaction is dCDP + GTP = dCTP + GDP. It catalyses the reaction dGDP + ATP = dGTP + ADP. The enzyme catalyses dADP + GTP = dATP + GDP. It carries out the reaction thiamine diphosphate + ADP = thiamine triphosphate + AMP. Catalyzes the reversible transfer of the terminal phosphate group between ATP and AMP. Also displays broad nucleoside diphosphate kinase activity. Plays an important role in cellular energy homeostasis and in adenine nucleotide metabolism. Also catalyzes at a very low rate the synthesis of thiamine triphosphate (ThTP) from thiamine diphosphate (ThDP) and ADP. In Homo sapiens (Human), this protein is Adenylate kinase isoenzyme 1.